The following is a 151-amino-acid chain: Ribosome-binding factor A (151 aa).

Residues 120 to 151 (RSPKVVRDLDDTSSDDTSPDANTDTDKETDAE) form a disordered region.

The protein belongs to the RbfA family. As to quaternary structure, monomer. Binds 30S ribosomal subunits, but not 50S ribosomal subunits or 70S ribosomes.

It localises to the cytoplasm. Its function is as follows. One of several proteins that assist in the late maturation steps of the functional core of the 30S ribosomal subunit. Associates with free 30S ribosomal subunits (but not with 30S subunits that are part of 70S ribosomes or polysomes). Required for efficient processing of 16S rRNA. May interact with the 5'-terminal helix region of 16S rRNA. The polypeptide is Ribosome-binding factor A (Xanthobacter autotrophicus (strain ATCC BAA-1158 / Py2)).